The chain runs to 350 residues: Holliday junction branch migration complex subunit RuvB (350 aa).

The interval 1 to 183 (MSAERLVNPH…FVAVHRLVFY (183 aa)) is large ATPase domain (RuvB-L). Residues Leu-22, Arg-23, Gly-64, Lys-67, Thr-68, Ser-69, 130–132 (EDF), Arg-173, Tyr-183, and Arg-220 contribute to the ATP site. Thr-68 is a Mg(2+) binding site. The interval 184 to 254 (SDAAMTEIVS…VAREALAQLE (71 aa)) is small ATPAse domain (RuvB-S). Residues 257-350 (ELGLDENDRR…ESGPQQGTLF (94 aa)) are head domain (RuvB-H). DNA-binding residues include Arg-312 and Arg-317.

The protein belongs to the RuvB family. In terms of assembly, homohexamer. Forms an RuvA(8)-RuvB(12)-Holliday junction (HJ) complex. HJ DNA is sandwiched between 2 RuvA tetramers; dsDNA enters through RuvA and exits via RuvB. An RuvB hexamer assembles on each DNA strand where it exits the tetramer. Each RuvB hexamer is contacted by two RuvA subunits (via domain III) on 2 adjacent RuvB subunits; this complex drives branch migration. In the full resolvosome a probable DNA-RuvA(4)-RuvB(12)-RuvC(2) complex forms which resolves the HJ.

It is found in the cytoplasm. It catalyses the reaction ATP + H2O = ADP + phosphate + H(+). The RuvA-RuvB-RuvC complex processes Holliday junction (HJ) DNA during genetic recombination and DNA repair, while the RuvA-RuvB complex plays an important role in the rescue of blocked DNA replication forks via replication fork reversal (RFR). RuvA specifically binds to HJ cruciform DNA, conferring on it an open structure. The RuvB hexamer acts as an ATP-dependent pump, pulling dsDNA into and through the RuvAB complex. RuvB forms 2 homohexamers on either side of HJ DNA bound by 1 or 2 RuvA tetramers; 4 subunits per hexamer contact DNA at a time. Coordinated motions by a converter formed by DNA-disengaged RuvB subunits stimulates ATP hydrolysis and nucleotide exchange. Immobilization of the converter enables RuvB to convert the ATP-contained energy into a lever motion, pulling 2 nucleotides of DNA out of the RuvA tetramer per ATP hydrolyzed, thus driving DNA branch migration. The RuvB motors rotate together with the DNA substrate, which together with the progressing nucleotide cycle form the mechanistic basis for DNA recombination by continuous HJ branch migration. Branch migration allows RuvC to scan DNA until it finds its consensus sequence, where it cleaves and resolves cruciform DNA. The polypeptide is Holliday junction branch migration complex subunit RuvB (Chloroflexus aggregans (strain MD-66 / DSM 9485)).